Here is a 500-residue protein sequence, read N- to C-terminus: NAD(P)H-quinone oxidoreductase chain 4, chloroplastic (500 aa).

The next 14 membrane-spanning stretches (helical) occupy residues 4–24, 35–55, 87–107, 113–130, 134–154, 167–187, 208–228, 242–262, 272–292, 305–325, 330–350, 386–406, 416–436, and 462–482; these read FPWL…IFFL, YTIC…CYHF, IGPI…AWPV, LFHF…GLFS, LLLF…LLAM, FILY…GVAL, VLEI…SPII, HYST…YGLI, AHSI…IYAA, IAYS…SLTD, GALL…FLAG, LALP…GIIT, LLIT…SLSM, and LFLS…PDFV.

Belongs to the complex I subunit 4 family.

It localises to the plastid. It is found in the chloroplast thylakoid membrane. The enzyme catalyses a plastoquinone + NADH + (n+1) H(+)(in) = a plastoquinol + NAD(+) + n H(+)(out). The catalysed reaction is a plastoquinone + NADPH + (n+1) H(+)(in) = a plastoquinol + NADP(+) + n H(+)(out). The sequence is that of NAD(P)H-quinone oxidoreductase chain 4, chloroplastic from Solanum lycopersicum (Tomato).